The chain runs to 521 residues: Protein disulfide-isomerase A5 (521 aa).

Positions 1–25 are cleaved as a signal peptide; that stretch reads MARVVPAWLLLPLAVWVVLPTWLSS. Thioredoxin domains are found at residues 136–263, 274–386, and 387–508; these read FLKD…NPQP, ADEG…NPES, and PPPP…TLRE. Disulfide bonds link C184–C187, C307–C310, and C428–C431. The short motif at 518–521 is the Prevents secretion from ER element; that stretch reads KEEL.

The protein belongs to the protein disulfide isomerase family.

Its subcellular location is the endoplasmic reticulum lumen. It catalyses the reaction Catalyzes the rearrangement of -S-S- bonds in proteins.. The sequence is that of Protein disulfide-isomerase A5 (PDIA5) from Bos taurus (Bovine).